Consider the following 329-residue polypeptide: tRNA(Ile)-lysidine synthase (329 aa).

Ser-37–Ser-42 provides a ligand contact to ATP.

This sequence belongs to the tRNA(Ile)-lysidine synthase family.

It localises to the cytoplasm. It carries out the reaction cytidine(34) in tRNA(Ile2) + L-lysine + ATP = lysidine(34) in tRNA(Ile2) + AMP + diphosphate + H(+). Its function is as follows. Ligates lysine onto the cytidine present at position 34 of the AUA codon-specific tRNA(Ile) that contains the anticodon CAU, in an ATP-dependent manner. Cytidine is converted to lysidine, thus changing the amino acid specificity of the tRNA from methionine to isoleucine. This is tRNA(Ile)-lysidine synthase from Zymomonas mobilis subsp. mobilis (strain ATCC 31821 / ZM4 / CP4).